Here is a 284-residue protein sequence, read N- to C-terminus: NAD kinase (284 aa).

Aspartate 70 functions as the Proton acceptor in the catalytic mechanism. Residues 70–71 (DG), 139–140 (NE), lysine 167, aspartate 169, leucine 177, 180–185 (TAYNLS), and glutamine 236 each bind NAD(+).

The protein belongs to the NAD kinase family. A divalent metal cation serves as cofactor.

It is found in the cytoplasm. The enzyme catalyses NAD(+) + ATP = ADP + NADP(+) + H(+). In terms of biological role, involved in the regulation of the intracellular balance of NAD and NADP, and is a key enzyme in the biosynthesis of NADP. Catalyzes specifically the phosphorylation on 2'-hydroxyl of the adenosine moiety of NAD to yield NADP. This Helicobacter pylori (strain G27) protein is NAD kinase.